A 94-amino-acid chain; its full sequence is Co-chaperonin GroES (94 aa).

This sequence belongs to the GroES chaperonin family. Heptamer of 7 subunits arranged in a ring. Interacts with the chaperonin GroEL.

Its subcellular location is the cytoplasm. In terms of biological role, together with the chaperonin GroEL, plays an essential role in assisting protein folding. The GroEL-GroES system forms a nano-cage that allows encapsulation of the non-native substrate proteins and provides a physical environment optimized to promote and accelerate protein folding. GroES binds to the apical surface of the GroEL ring, thereby capping the opening of the GroEL channel. This Ruminiclostridium cellulolyticum (strain ATCC 35319 / DSM 5812 / JCM 6584 / H10) (Clostridium cellulolyticum) protein is Co-chaperonin GroES.